A 355-amino-acid polypeptide reads, in one-letter code: Guanine nucleotide-binding protein G(i) subunit alpha-2 (355 aa).

Glycine 2 carries the N-myristoyl glycine lipid modification. The S-palmitoyl cysteine moiety is linked to residue cysteine 3. In terms of domain architecture, G-alpha spans 32–355; it reads REVKLLLLGA…KNNLKDCGLF (324 aa). The G1 motif stretch occupies residues 35 to 48; sequence KLLLLGAGESGKST. Residues 40-47, 176-182, 201-205, 270-273, and alanine 327 contribute to the GTP site; these read GAGESGKS, LRTRVKT, DVGGQ, and NKKD. Mg(2+)-binding residues include serine 47 and threonine 182. The segment at 174 to 182 is G2 motif; sequence DVLRTRVKT. Residues 197-206 are G3 motif; sequence FKMFDVGGQR. Residues 266–273 form a G4 motif region; the sequence is ILFLNKKD. Positions 325-330 are G5 motif; it reads TCATDT.

The protein belongs to the G-alpha family. G(i/o/t/z) subfamily. G proteins are composed of 3 units; alpha, beta and gamma. The alpha chain contains the guanine nucleotide binding site.

It localises to the cytoplasm. It is found in the cytoskeleton. The protein resides in the microtubule organizing center. Its subcellular location is the centrosome. The protein localises to the cell membrane. Guanine nucleotide-binding proteins (G proteins) are involved as modulators or transducers in various transmembrane signaling systems. The G(i) proteins are involved in hormonal regulation of adenylate cyclase: they inhibit the cyclase in response to beta-adrenergic stimuli. May play a role in cell division. The protein is Guanine nucleotide-binding protein G(i) subunit alpha-2 (gnai2) of Oryzias latipes (Japanese rice fish).